Consider the following 251-residue polypeptide: Triosephosphate isomerase (251 aa).

9-11 lines the substrate pocket; the sequence is NWK. The active-site Electrophile is the H95. E167 acts as the Proton acceptor in catalysis. Substrate is bound by residues G173, S212, and 233-234; that span reads GG.

Belongs to the triosephosphate isomerase family. Homodimer.

Its subcellular location is the cytoplasm. It carries out the reaction D-glyceraldehyde 3-phosphate = dihydroxyacetone phosphate. It functions in the pathway carbohydrate biosynthesis; gluconeogenesis. The protein operates within carbohydrate degradation; glycolysis; D-glyceraldehyde 3-phosphate from glycerone phosphate: step 1/1. In terms of biological role, involved in the gluconeogenesis. Catalyzes stereospecifically the conversion of dihydroxyacetone phosphate (DHAP) to D-glyceraldehyde-3-phosphate (G3P). The polypeptide is Triosephosphate isomerase (Pseudomonas syringae pv. tomato (strain ATCC BAA-871 / DC3000)).